An 839-amino-acid chain; its full sequence is MAQFDTEYQRLEASYSDSPPGEEDLLVHVAEGSKSPWHHIENLDLFFSRVYNLHQKNGFTCMLIGEIFELMQFLFVVAFTTFLVSCVDYDILFANKMVNHSLHPTEPVKVTLPDAFLPAQVCSARIQENGSLITILVIAGVFWIHRLIKFIYNICCYWEIHSFYLHALRIPMSALPYCTWQEVQARIVQTQKEHQICIHKRELTELDIYHRILRFQNYMVALVNKSLLPLRFRLPGLGEAVFFTRGLKYNFELILFWGPGSLFLNEWSLKAEYKRGGQRLELAQRLSNRILWIGIANFLLCPLILIWQILYAFFSYAEVLKREPGALGARCWSLYGRCYLRHFNELEHELQSRLNRGYKPASKYMNCFLSPLLTLLAKNGAFFAGSILAVLIALTIYDEDVLAVEHVLTTVTLLGVTVTVCRSFIPDQHMVFCPEQLLRVILAHIHYMPDHWQGNAHRSQTRDEFAQLFQYKAVFILEELLSPIVTPLILIFCLRPRALEIIDFFRNFTVEVVGVGDTCSFAQMDVRQHGHPQWLSAGQTEASVYQQAEDGKTELSLMHFAITNPGWQPPRESTAFLGFLKEQVQRDGAAASLAQGGLLPENALFTSIQSLQSESEPLSLIANVVAGSSCRGPPLPRDLQGSRHRAEVASALRSFSPLQPGQAPTGRAHSTMTGSGVDARTASSGSSVWEGQLQSLVLSEYASTEMSLHALYMHQLHKQQAQAEPERHVWHRRESDESGESAPDEGGEGARAPQSIPRSASYPCAAPRPGAPETTALHGGFQRRYGGITDPGTVPRVPSHFSRLPLGGWAEDGQSASRHPEPVPEEGSEDELPPQVHKV.

The segment at methionine 1–proline 20 is disordered. An N-acetylalanine modification is found at alanine 2. At alanine 2–cysteine 61 the chain is on the cytoplasmic side. The short motif at tyrosine 8–leucine 11 is the Tyrosine-based sorting signal element. A phosphoserine mark is found at serine 14, serine 16, and serine 18. Residues methionine 62–valine 84 traverse the membrane as a helical segment. Over serine 85 to glutamate 128 the chain is Lumenal. N-linked (GlcNAc...) asparagine glycosylation is present at asparagine 99. A helical transmembrane segment spans residues asparagine 129 to isoleucine 154. The Cytoplasmic segment spans residues cysteine 155 to isoleucine 290. The stretch at leucine 291–cysteine 301 is an intramembrane region. Residues proline 302–valine 319 lie on the Cytoplasmic side of the membrane. The stretch at leucine 320–glycine 328 is an intramembrane region. Residues alanine 329 to proline 371 are Cytoplasmic-facing. Residues leucine 372–tyrosine 397 traverse the membrane as a helical segment. Over aspartate 398–histidine 406 the chain is Lumenal. Residues valine 407–phenylalanine 424 form a helical membrane-spanning segment. The Cytoplasmic segment spans residues isoleucine 425 to glutamine 470. The stretch at tyrosine 471–leucine 480 is an intramembrane region. Residues leucine 481–proline 483 are Cytoplasmic-facing. An intramembrane segment occupies isoleucine 484 to phenylalanine 492. At cysteine 493–valine 839 the chain is on the cytoplasmic side. Residues serine 656, serine 735, serine 738, serine 741, and serine 828 each carry the phosphoserine modification. 2 disordered regions span residues serine 656–serine 686 and histidine 717–valine 839. Positions glutamate 724–aspartate 736 are enriched in basic and acidic residues. Acidic residues-rich tracts occupy residues glutamate 737 to glycine 747 and valine 823 to leucine 832.

It belongs to the ATG9 family. In terms of assembly, homotrimer; forms a homotrimer with a central pore that forms a path between the two membrane leaflets. Interacts (via cytoplasmic its C-terminus) with ATG2A. Interacts with SUPT20H. Interacts (via the tyrosine-based sorting signal motif) with AP4M1; promoting association with the AP-4 complex. Interacts with ARFIP1 and ARFIP2. Interacts with PI4K2A and PI4KB. Interacts with ATG4A; the interaction is direct and promotes ATG9A trafficking. Post-translationally, ufmylated in a DDRGK1 dependent manner.

The protein resides in the preautophagosomal structure membrane. It is found in the cytoplasmic vesicle. It localises to the autophagosome membrane. The protein localises to the golgi apparatus. Its subcellular location is the trans-Golgi network membrane. The protein resides in the late endosome membrane. It is found in the recycling endosome membrane. It localises to the endoplasmic reticulum membrane. The protein localises to the mitochondrion membrane. It catalyses the reaction a 1,2-diacyl-sn-glycero-3-phosphocholine(in) = a 1,2-diacyl-sn-glycero-3-phosphocholine(out). The catalysed reaction is a 1,2-diacyl-sn-glycero-3-phospho-L-serine(in) = a 1,2-diacyl-sn-glycero-3-phospho-L-serine(out). It carries out the reaction a 1,2-diacyl-sn-glycero-3-phosphoethanolamine(in) = a 1,2-diacyl-sn-glycero-3-phosphoethanolamine(out). Functionally, phospholipid scramblase involved in autophagy by mediating autophagosomal membrane expansion. Cycles between the preautophagosomal structure/phagophore assembly site (PAS) and the cytoplasmic vesicle pool and supplies membrane for the growing autophagosome. Lipid scramblase activity plays a key role in preautophagosomal structure/phagophore assembly by distributing the phospholipids that arrive through ATG2 (ATG2A or ATG2B) from the cytoplasmic to the luminal leaflet of the bilayer, thereby driving autophagosomal membrane expansion. Also required to supply phosphatidylinositol 4-phosphate to the autophagosome initiation site by recruiting the phosphatidylinositol 4-kinase beta (PI4KB) in a process dependent on ARFIP2, but not ARFIP1. In addition to autophagy, also plays a role in necrotic cell death. This Homo sapiens (Human) protein is Autophagy-related protein 9A.